We begin with the raw amino-acid sequence, 257 residues long: Thiazole synthase (257 aa).

The Schiff-base intermediate with DXP role is filled by lysine 96. 1-deoxy-D-xylulose 5-phosphate-binding positions include glycine 157, 184-185, and 206-207; these read AG and NT.

Belongs to the ThiG family. As to quaternary structure, homotetramer. Forms heterodimers with either ThiH or ThiS.

It localises to the cytoplasm. It catalyses the reaction [ThiS sulfur-carrier protein]-C-terminal-Gly-aminoethanethioate + 2-iminoacetate + 1-deoxy-D-xylulose 5-phosphate = [ThiS sulfur-carrier protein]-C-terminal Gly-Gly + 2-[(2R,5Z)-2-carboxy-4-methylthiazol-5(2H)-ylidene]ethyl phosphate + 2 H2O + H(+). It participates in cofactor biosynthesis; thiamine diphosphate biosynthesis. Its function is as follows. Catalyzes the rearrangement of 1-deoxy-D-xylulose 5-phosphate (DXP) to produce the thiazole phosphate moiety of thiamine. Sulfur is provided by the thiocarboxylate moiety of the carrier protein ThiS. In vitro, sulfur can be provided by H(2)S. In Agrobacterium fabrum (strain C58 / ATCC 33970) (Agrobacterium tumefaciens (strain C58)), this protein is Thiazole synthase.